Reading from the N-terminus, the 403-residue chain is Chorismate synthase (403 aa).

Residues arginine 40 and arginine 46 each coordinate NADP(+). Residues 140-142 (RSS), 261-262 (QA), glycine 305, 320-324 (KPIST), and arginine 346 contribute to the FMN site.

It belongs to the chorismate synthase family. Homotetramer. FMNH2 serves as cofactor.

The catalysed reaction is 5-O-(1-carboxyvinyl)-3-phosphoshikimate = chorismate + phosphate. Its pathway is metabolic intermediate biosynthesis; chorismate biosynthesis; chorismate from D-erythrose 4-phosphate and phosphoenolpyruvate: step 7/7. Catalyzes the anti-1,4-elimination of the C-3 phosphate and the C-6 proR hydrogen from 5-enolpyruvylshikimate-3-phosphate (EPSP) to yield chorismate, which is the branch point compound that serves as the starting substrate for the three terminal pathways of aromatic amino acid biosynthesis. This reaction introduces a second double bond into the aromatic ring system. In Corynebacterium diphtheriae (strain ATCC 700971 / NCTC 13129 / Biotype gravis), this protein is Chorismate synthase.